Here is a 305-residue protein sequence, read N- to C-terminus: UDP-3-O-acyl-N-acetylglucosamine deacetylase (305 aa).

The Zn(2+) site is built by His78, His237, and Asp241. Residue His264 is the Proton donor of the active site.

Belongs to the LpxC family. The cofactor is Zn(2+).

The enzyme catalyses a UDP-3-O-[(3R)-3-hydroxyacyl]-N-acetyl-alpha-D-glucosamine + H2O = a UDP-3-O-[(3R)-3-hydroxyacyl]-alpha-D-glucosamine + acetate. It functions in the pathway glycolipid biosynthesis; lipid IV(A) biosynthesis; lipid IV(A) from (3R)-3-hydroxytetradecanoyl-[acyl-carrier-protein] and UDP-N-acetyl-alpha-D-glucosamine: step 2/6. Functionally, catalyzes the hydrolysis of UDP-3-O-myristoyl-N-acetylglucosamine to form UDP-3-O-myristoylglucosamine and acetate, the committed step in lipid A biosynthesis. The sequence is that of UDP-3-O-acyl-N-acetylglucosamine deacetylase from Burkholderia mallei (strain NCTC 10247).